The following is a 536-amino-acid chain: SNW domain-containing protein 1 (536 aa).

Residues 1 to 46 form a disordered region; it reads MALTSFLPAPTQLSQDQLEAEEKARSQRSRQTSLVSSRREPPPYGY. Position 2 is an N-acetylalanine (Ala2). At Ser14 the chain carries Phosphoserine. A Glycyl lysine isopeptide (Lys-Gly) (interchain with G-Cter in SUMO2) cross-link involves residue Lys23. The segment at 59 to 79 is interaction with PPIL1; it reads GDGGAFPEIHVAQYPLDMGRK. Glycyl lysine isopeptide (Lys-Gly) (interchain with G-Cter in SUMO2) cross-links involve residues Lys81, Lys97, Lys115, Lys122, Lys141, Lys158, and Lys170. Positions 174-339 are SNW; sequence AQYIRYTPSQ…KARERRAGIK (166 aa). 2 positions are modified to phosphoserine: Ser182 and Ser190. Lys193 participates in a covalent cross-link: Glycyl lysine isopeptide (Lys-Gly) (interchain with G-Cter in SUMO2). The disordered stretch occupies residues 209–233; that stretch reads PPRFKINKKIPRGPPSPPAPVMHSP. A phosphoserine mark is found at Ser224, Ser232, and Ser234. Residues Lys240, Lys258, Lys286, Lys339, Lys344, Lys416, and Lys441 each participate in a glycyl lysine isopeptide (Lys-Gly) (interchain with G-Cter in SUMO2) cross-link. The segment at 311–386 is disordered; sequence KMAQKEKEKH…RSKLQRNENR (76 aa). Position 446 is a phosphoserine (Ser446). Lys452 participates in a covalent cross-link: Glycyl lysine isopeptide (Lys-Gly) (interchain with G-Cter in SUMO2). 2 stretches are compositionally biased toward basic and acidic residues: residues 470-489 and 503-530; these read NRFV…RGRE and KFLE…EHEG. A disordered region spans residues 470 to 536; the sequence is NRFVPDKEFS…EHEGKKRRKE (67 aa). Phosphoserine occurs at positions 479 and 481. A Glycyl lysine isopeptide (Lys-Gly) (interchain with G-Cter in SUMO2) cross-link involves residue Lys509.

Belongs to the SNW family. In terms of assembly, identified in the spliceosome C complex. Associates with U4/U6-U5 tri-small nuclear ribonucleoproteins (U4/U6-U5 tri-snRNPs). Component of the minor spliceosome, which splices U12-type introns. Interacts with SKI, SMAD2,SMAD3, RBPJ, RB1, PABPN1, MAGEA1, SIRT1, FOXN3, U2AF2, DAXX and ATP1B4. Interacts with PPIL1. Interacts with VDR and RXRA; preferentially associates with VDR:RXRA heterodimers. Interacts with NCOR2. Interacts with MAML1. Interacts with NOTCH1 NICD; the interaction involves multimerized NOTCH1 NICD. Forms a complex with NOTCH1 NICD and MAML1; the association is dissociated by RBPJ. Associates with positive transcription elongation factor b (P-TEFb). Component of the SNARP complex which consists at least of SNIP1, SNW1, THRAP3, BCLAF1 and PNN. As to quaternary structure, (Microbial infection) Interacts with human papillomavirus type-16 (HPV16) E7 protein. (Microbial infection) Interacts with EBV EBNA2; EBNA2 competes with NCOR2 for interaction with SNW1.

It localises to the nucleus. Functionally, involved in pre-mRNA splicing as component of the spliceosome. As a component of the minor spliceosome, involved in the splicing of U12-type introns in pre-mRNAs. Required for the specific splicing of CDKN1A pre-mRNA; the function probably involves the recruitment of U2AF2 to the mRNA. May recruit PPIL1 to the spliceosome. May be involved in cyclin-D1/CCND1 mRNA stability through the SNARP complex which associates with both the 3'end of the CCND1 gene and its mRNA. Involved in transcriptional regulation. Modulates TGF-beta-mediated transcription via association with SMAD proteins, MYOD1-mediated transcription via association with PABPN1, RB1-mediated transcriptional repression, and retinoid-X receptor (RXR)- and vitamin D receptor (VDR)-dependent gene transcription in a cell line-specific manner probably involving coactivators NCOA1 and GRIP1. Is involved in NOTCH1-mediated transcriptional activation. Binds to multimerized forms of Notch intracellular domain (NICD) and is proposed to recruit transcriptional coactivators such as MAML1 to form an intermediate preactivation complex which associates with DNA-bound CBF-1/RBPJ to form a transcriptional activation complex by releasing SNW1 and redundant NOTCH1 NICD. Its function is as follows. (Microbial infection) Is recruited by HIV-1 Tat to Tat:P-TEFb:TAR RNA complexes and is involved in Tat transcription by recruitment of MYC, MEN1 and TRRAP to the HIV promoter. In terms of biological role, (Microbial infection) Proposed to be involved in transcriptional activation by EBV EBNA2 of CBF-1/RBPJ-repressed promoters. The chain is SNW domain-containing protein 1 (SNW1) from Homo sapiens (Human).